The following is a 315-amino-acid chain: Methionyl-tRNA formyltransferase (315 aa).

113–116 (SLLP) provides a ligand contact to (6S)-5,6,7,8-tetrahydrofolate.

The protein belongs to the Fmt family.

It carries out the reaction L-methionyl-tRNA(fMet) + (6R)-10-formyltetrahydrofolate = N-formyl-L-methionyl-tRNA(fMet) + (6S)-5,6,7,8-tetrahydrofolate + H(+). In terms of biological role, attaches a formyl group to the free amino group of methionyl-tRNA(fMet). The formyl group appears to play a dual role in the initiator identity of N-formylmethionyl-tRNA by promoting its recognition by IF2 and preventing the misappropriation of this tRNA by the elongation apparatus. In Shigella flexneri serotype 5b (strain 8401), this protein is Methionyl-tRNA formyltransferase.